Reading from the N-terminus, the 380-residue chain is 3-isopropylmalate dehydratase large subunit (380 aa).

[4Fe-4S] cluster-binding residues include Cys-262, Cys-320, and Cys-323.

Belongs to the aconitase/IPM isomerase family. LeuC type 2 subfamily. Heterodimer of LeuC and LeuD. The cofactor is [4Fe-4S] cluster.

The catalysed reaction is (2R,3S)-3-isopropylmalate = (2S)-2-isopropylmalate. The protein operates within amino-acid biosynthesis; L-leucine biosynthesis; L-leucine from 3-methyl-2-oxobutanoate: step 2/4. Its function is as follows. Catalyzes the isomerization between 2-isopropylmalate and 3-isopropylmalate, via the formation of 2-isopropylmaleate. This Thermococcus kodakarensis (strain ATCC BAA-918 / JCM 12380 / KOD1) (Pyrococcus kodakaraensis (strain KOD1)) protein is 3-isopropylmalate dehydratase large subunit.